A 416-amino-acid chain; its full sequence is Lactose permease (416 aa).

The Cytoplasmic segment spans residues 1-13 (MKLSELAPRERHN). A helical membrane pass occupies residues 14-34 (FIYFMLFFFFYYFIMSAYFPF). Topologically, residues 35–50 (FPVWLAEVNHLTKTET) are periplasmic. The helical transmembrane segment at 51-71 (GIVFSCISLFAIIFQPVFGLI) threads the bilayer. Topologically, residues 72 to 80 (SDKLGLRKH) are cytoplasmic. The chain crosses the membrane as a helical span at residues 81–101 (LLWTITILLILFAPFFIFVFS). Residue Pro-102 is a topological domain, periplasmic. The helical transmembrane segment at 103 to 123 (LLQMNIMAGALVGGVYLGIVF) threads the bilayer. Residues 124 to 149 (SSRSGAVEAYIERVSRANRFEYGKVR) are Cytoplasmic-facing. The next 2 membrane-spanning stretches (helical) occupy residues 150–170 (VSGC…FSID) and 171–191 (PNIT…LLWV). Topologically, residues 192–223 (SKPESSNSAEVIDALGANRQAFSMRTAAELFR) are cytoplasmic. A helical transmembrane segment spans residues 224–244 (MPRFWGFIIYVVGVASVYDVF). At 245–267 (DQQFANFFKGFFSSPQRGTEVFG) the chain is on the periplasmic side. Residues 268–288 (FVTTGGELLNALIMFCAPAII) traverse the membrane as a helical segment. The Cytoplasmic portion of the chain corresponds to 289-295 (NRIGAKN). A run of 2 helical transmembrane segments spans residues 296–316 (ALLI…FATS) and 317–337 (AVEV…LLVG). The Cytoplasmic portion of the chain corresponds to 338 to 353 (TFKYISSAFKGKLSAT). A helical membrane pass occupies residues 354–374 (LFLIGFNLSKQLSSVVLSAWV). At 375-384 (GRMYDTVGFH) the chain is on the periplasmic side. A helical membrane pass occupies residues 385 to 405 (QAYLILGCITLSFTVISLFTL). The Cytoplasmic portion of the chain corresponds to 406–416 (KGSKTLLPATA).

This sequence belongs to the major facilitator superfamily. Oligosaccharide:H(+) symporter (OHS) (TC 2.A.1.5) family.

It is found in the cell inner membrane. It catalyses the reaction lactose(in) + H(+)(in) = lactose(out) + H(+)(out). Functionally, responsible for transport of beta-galactosides into the cell, with the concomitant import of a proton (symport system). The chain is Lactose permease (lacY) from Klebsiella oxytoca.